The following is a 1085-amino-acid chain: MQRTGDGERPRFFQQDLDVIPDDKGSDLFIQTAEGPDGHVDDEVIEDKTRFITNLKEVLGALPDDILEGYWNSYGASKDGLSKAIQQHFEGKETKGCSDAHDDLNTETQNSQNTIVNGHVSNQIKRASEGGLPILKRKKQLCCWRRFLGSTQVNAMATRPTAQPLKYGSELLIRRTSGQPNNSGLRSRKKPGFSQYVRFCDATSSRELGRLPEDISEILHTLLQTPGVEFKATMIFCNSKRLSVGDLFVVRLDCFVTSLLFDPALPGKAEDEQFQQRNRALMLLFKNLNMTPLAEGADLVPEKPEFYDLEEDESITDATVNSPTASDDYMDLNQLRNFYRSTQESASIFKLRETTPPVDKFQLELRRYQKQGLTWMLLREREHAILEPGSQDALADGPMDPMWRMFKWPRDTSWDVSRGTTYVSLEADIPDKFYANLHTGEFSLVKPISKSILKGGILADEMGLGKTISILALITMVPSDTKHLLTTAQEKPPVGHLSLELGISTVKPYTASTTLIVVPMSLLPQWRNEFVRVNDGNGLYCEVYYAGNVSNLRTLLVKQKSPPSVVLTTYGVVQTEWSKLQQFDYEASNEGLFSVEFFRIILDEGHNIRNRTTKTSKAVMALTSRRKWVLTGTPIMNRLDDLFSLIKFMNFEPWCKIDYWRQFVSDPFEKKDYSSALEVIQAVMGPILLRRTKNMKDEDGNPLVQLPPKEVVIEMIRFSDTEAGLYKYFLSKAEHSVKESLARGDLLKKYSTILLHILRLRQVCCHFKLLGSQDENDEDLKNMKLINDIPDISTLLGEDSQSPGSSSEGMPDFIEDFKTKYPNSDALKDLECSICTCEAISPLTSVVFTRCGHPFCESCLLEYIQFQNKKGSETICPNCRAAVESRYLLKLEDINGKLEPVPYSNTKKSSKIVALIRHLKHLQDTSANEQVVVFSQFSSYLDILENELRQSFASDICEIYKFDGRLDLKERSNVLAKFTEKSLVKMKVLLLSLKAGGVGLNLTCASHAFIMDPWWSPGMEDQAMDRIHRIGQSNTVKIYRFIVENSIEEKMLRIQEKKRSLGEFVDADEEERRRSRIEEIKMLFA.

The span at 92 to 104 shows a compositional bias: basic and acidic residues; that stretch reads KETKGCSDAHDDL. A disordered region spans residues 92–118; it reads KETKGCSDAHDDLNTETQNSQNTIVNG. Residues 106–118 are compositionally biased toward polar residues; the sequence is TETQNSQNTIVNG. The Helicase ATP-binding domain maps to 447 to 652; that stretch reads PISKSILKGG…FSLIKFMNFE (206 aa). Residue 460–467 participates in ATP binding; sequence DEMGLGKT. The DEGH box signature appears at 603 to 606; that stretch reads DEGH. The RING-type zinc finger occupies 832 to 880; the sequence is CSICTCEAISPLTSVVFTRCGHPFCESCLLEYIQFQNKKGSETICPNCR. Residues 914-1072 enclose the Helicase C-terminal domain; that stretch reads ALIRHLKHLQ…EFVDADEEER (159 aa).

Belongs to the SNF2/RAD54 helicase family.

The protein localises to the cytoplasm. It is found in the nucleus. Its function is as follows. Probable helicase, member of the UBC2/RAD6 epistasis group. Functions with DNA repair protein RAD18 in error-free postreplication DNA repair. Involved in the maintenance of wild-type rates of instability of simple repetitive sequences such as poly(GT) repeats. Seems to be involved in maintaining a balance which acts in favor of error-prone non-homologous joining during DNA double-strand breaks repairs. This is DNA repair protein RAD5 (RAD5) from Eremothecium gossypii (strain ATCC 10895 / CBS 109.51 / FGSC 9923 / NRRL Y-1056) (Yeast).